Here is a 223-residue protein sequence, read N- to C-terminus: GTP-binding nuclear protein Ran (223 aa).

The Small GTPase Ran-type domain occupies 8-172; that stretch reads VVAEFKLVLV…LWILRKLTGD (165 aa). 19 to 26 contacts GTP; the sequence is DGGVGKTT. The switch-I stretch occupies residues 38-46; it reads KRYIATQGV. GTP contacts are provided by residues glycine 69, 123–126, and 151–153; these read NKVD and SAK. The interval 69–85 is switch-II; sequence GQEKLGGLREGYYIGAD.

The protein belongs to the small GTPase superfamily. Ran family. In terms of assembly, monomer. Found in a nuclear export complex with RanGTP, exportin and pre-miRNA.

It is found in the nucleus. GTP-binding protein involved in nucleocytoplasmic transport. Required for the import of protein into the nucleus and also for RNA export. Involved in chromatin condensation and control of cell cycle. This Tetrahymena pyriformis protein is GTP-binding nuclear protein Ran.